The sequence spans 38 residues: Conotoxin r7a (38 aa).

The propeptide occupies 1 to 5 (APAKR). Position 6 is a 6'-bromotryptophan (Trp6). 4-carboxyglutamate occurs at positions 10 and 11. Intrachain disulfides connect Cys12/Cys26, Cys19/Cys30, and Cys25/Cys35. The residue at position 15 (Trp15) is a 6'-bromotryptophan. Glu20 and Glu31 each carry 4-carboxyglutamate. Trp38 is modified (6'-bromotryptophan).

This sequence belongs to the conotoxin O2 superfamily. As to expression, expressed by the venom duct.

Its subcellular location is the secreted. Functionally, induces a sleep-like state in mice. The protein is Conotoxin r7a of Conus radiatus (Rayed cone).